A 386-amino-acid chain; its full sequence is 11-beta-hydroxysteroid dehydrogenase type 2 (386 aa).

Position 82–111 (82–111 (TRAVLITGCDTGFGKETAKKLDAMGFTVLA)) interacts with NAD(+). Ser219 is a binding site for substrate. Tyr232 (proton acceptor) is an active-site residue.

Belongs to the short-chain dehydrogenases/reductases (SDR) family. As to quaternary structure, interacts with ligand-free cytoplasmic NR3C2. As to expression, highly expressed in kidney. Also found in colon and small intestine. Not expressed in the adrenal gland. Expressed in uterus.

It localises to the microsome. It is found in the endoplasmic reticulum. It catalyses the reaction an 11beta-hydroxysteroid + NAD(+) = an 11-oxosteroid + NADH + H(+). The enzyme catalyses corticosterone + NAD(+) = 11-dehydrocorticosterone + NADH + H(+). It carries out the reaction 11beta,17beta-dihydroxyandrost-4-ene-3-one + NAD(+) = 17beta-hydroxyandrost-4-ene-3,11-dione + NADH + H(+). The catalysed reaction is 11beta-hydroxyandrost-4-ene-3,17-dione + NAD(+) = androst-4-ene-3,11,17-trione + NADH + H(+). Its pathway is steroid metabolism. With respect to regulation, inhibited by glycyrrhetinic acid. Induced by progesterone, through the Ihh signaling pathway. Catalyzes the conversion of biologically active 11beta-hydroxyglucocorticoids (11beta-hydroxysteroid) such as corticosterone, to inactive 11-ketoglucocorticoids (11-oxosteroid) such as 11-dehydrocorticosterone, in the presence of NAD(+). Functions as a dehydrogenase (oxidase), thereby decreasing the concentration of active glucocorticoids, thus protecting the nonselective mineralocorticoid receptor from occupation by glucocorticoids. Plays an important role in maintaining glucocorticoids balance during preimplantation and protects the fetus from excessive maternal corticosterone exposure. Catalyzes the oxidation of 11beta-hydroxytestosterone (11beta,17beta-dihydroxyandrost-4-ene-3-one) to 11-ketotestosterone (17beta-hydroxyandrost-4-ene-3,11-dione), a major bioactive androgen. Catalyzes the conversion of 11beta-hydroxyandrostenedione (11beta-hydroxyandrost-4-ene-3,17-dione) to 11-ketoandrostenedione (androst-4-ene-3,11,17-trione), which can be further metabolized to 11-ketotestosterone. Converts 7-beta-25-dihydroxycholesterol to 7-oxo-25-hydroxycholesterol in vitro. 7-beta-25-dihydroxycholesterol (not 7-oxo-25-hydroxycholesterol) acts as a ligand for the G-protein-coupled receptor (GPCR) Epstein-Barr virus-induced gene 2 (EBI2) and may thereby regulate immune cell migration. The polypeptide is 11-beta-hydroxysteroid dehydrogenase type 2 (Hsd11b2) (Mus musculus (Mouse)).